The primary structure comprises 116 residues: T cell receptor alpha variable 38-2/delta variable 8 (116 aa).

Residues 1–21 form the signal peptide; the sequence is MACPGFLWALVISTCLEFSMA. Positions 22–116 constitute an Ig-like domain; that stretch reads QTVTQSQPEM…AAMYFCAYRS (95 aa). A disulfide bond links cysteine 43 and cysteine 112. A glycan (N-linked (GlcNAc...) asparagine) is linked at asparagine 78.

Alpha-beta TR is a heterodimer composed of an alpha and beta chain; disulfide-linked. The alpha-beta TR is associated with the transmembrane signaling CD3 coreceptor proteins to form the TR-CD3 (TcR or TCR). The assembly of alpha-beta TR heterodimers with CD3 occurs in the endoplasmic reticulum where a single alpha-beta TR heterodimer associates with one CD3D-CD3E heterodimer, one CD3G-CD3E heterodimer and one CD247 homodimer forming a stable octameric structure. CD3D-CD3E and CD3G-CD3E heterodimers preferentially associate with TR alpha and TR beta chains, respectively. The association of the CD247 homodimer is the last step of TcR assembly in the endoplasmic reticulum and is required for transport to the cell surface.

It is found in the cell membrane. In terms of biological role, v region of the variable domain of T cell receptor (TR) alpha chain that participates in the antigen recognition. Alpha-beta T cell receptors are antigen specific receptors which are essential to the immune response and are present on the cell surface of T lymphocytes. Recognize peptide-major histocompatibility (MH) (pMH) complexes that are displayed by antigen presenting cells (APC), a prerequisite for efficient T cell adaptive immunity against pathogens. Binding of alpha-beta TR to pMH complex initiates TR-CD3 clustering on the cell surface and intracellular activation of LCK that phosphorylates the ITAM motifs of CD3G, CD3D, CD3E and CD247 enabling the recruitment of ZAP70. In turn ZAP70 phosphorylates LAT, which recruits numerous signaling molecules to form the LAT signalosome. The LAT signalosome propagates signal branching to three major signaling pathways, the calcium, the mitogen-activated protein kinase (MAPK) kinase and the nuclear factor NF-kappa-B (NF-kB) pathways, leading to the mobilization of transcription factors that are critical for gene expression and essential for T cell growth and differentiation. The T cell repertoire is generated in the thymus, by V-(D)-J rearrangement. This repertoire is then shaped by intrathymic selection events to generate a peripheral T cell pool of self-MH restricted, non-autoaggressive T cells. Post-thymic interaction of alpha-beta TR with the pMH complexes shapes TR structural and functional avidity. The polypeptide is T cell receptor alpha variable 38-2/delta variable 8 (Homo sapiens (Human)).